The primary structure comprises 249 residues: 23S rRNA (guanosine-2'-O-)-methyltransferase RlmB (249 aa).

G200, I220, and L229 together coordinate S-adenosyl-L-methionine.

The protein belongs to the class IV-like SAM-binding methyltransferase superfamily. RNA methyltransferase TrmH family. RlmB subfamily.

It localises to the cytoplasm. It carries out the reaction guanosine(2251) in 23S rRNA + S-adenosyl-L-methionine = 2'-O-methylguanosine(2251) in 23S rRNA + S-adenosyl-L-homocysteine + H(+). Specifically methylates the ribose of guanosine 2251 in 23S rRNA. The protein is 23S rRNA (guanosine-2'-O-)-methyltransferase RlmB of Xylella fastidiosa (strain 9a5c).